Here is a 287-residue protein sequence, read N- to C-terminus: Ribonuclease Z (287 aa).

Residues His64, His66, Asp68, His69, His124, Asp191, and His250 each coordinate Zn(2+). Asp68 acts as the Proton acceptor in catalysis.

Belongs to the RNase Z family. In terms of assembly, homodimer. Zn(2+) is required as a cofactor.

It catalyses the reaction Endonucleolytic cleavage of RNA, removing extra 3' nucleotides from tRNA precursor, generating 3' termini of tRNAs. A 3'-hydroxy group is left at the tRNA terminus and a 5'-phosphoryl group is left at the trailer molecule.. Functionally, zinc phosphodiesterase, which displays some tRNA 3'-processing endonuclease activity. Probably involved in tRNA maturation, by removing a 3'-trailer from precursor tRNA. This Pyrobaculum neutrophilum (strain DSM 2338 / JCM 9278 / NBRC 100436 / V24Sta) (Thermoproteus neutrophilus) protein is Ribonuclease Z.